We begin with the raw amino-acid sequence, 129 residues long: Small ribosomal subunit protein uS9 (129 aa).

It belongs to the universal ribosomal protein uS9 family.

In Chlorobium chlorochromatii (strain CaD3), this protein is Small ribosomal subunit protein uS9.